The following is a 369-amino-acid chain: Molybdenum import ATP-binding protein ModC (369 aa).

Positions 7-243 (PGQAGIHARF…LDLPMAMTDD (237 aa)) constitute an ABC transporter domain. ATP is bound at residue 41 to 48 (GQSGSGKT). Residues 304 to 369 (EGSILNVLAV…AQIKAVSLLA (66 aa)) enclose the Mop domain.

It belongs to the ABC transporter superfamily. Molybdate importer (TC 3.A.1.8) family. The complex is composed of two ATP-binding proteins (ModC), two transmembrane proteins (ModB) and a solute-binding protein (ModA).

It is found in the cell inner membrane. It carries out the reaction molybdate(out) + ATP + H2O = molybdate(in) + ADP + phosphate + H(+). In terms of biological role, part of the ABC transporter complex ModABC involved in molybdenum import. Responsible for energy coupling to the transport system. This Bordetella pertussis (strain Tohama I / ATCC BAA-589 / NCTC 13251) protein is Molybdenum import ATP-binding protein ModC.